A 317-amino-acid chain; its full sequence is Universal stress protein MT2052 (317 aa).

ATP contacts are provided by residues Gly-13, 128–134 (GYRGQGA), 142–143 (SV), Gly-175, Asp-208, 277–283 (GSHGRGG), and 291–293 (SVS).

It belongs to the universal stress protein A family.

This chain is Universal stress protein MT2052, found in Mycobacterium tuberculosis (strain CDC 1551 / Oshkosh).